Reading from the N-terminus, the 380-residue chain is O-methyltransferase ucdC (380 aa).

S-adenosyl-L-methionine-binding positions include 222 to 223 (GG), aspartate 247, and arginine 283. Histidine 287 functions as the Proton acceptor in the catalytic mechanism.

It belongs to the class I-like SAM-binding methyltransferase superfamily. Cation-independent O-methyltransferase family. COMT subfamily.

The protein operates within secondary metabolite biosynthesis. Functionally, nonribosomal peptide synthetase that mediates the biosynthesis of usterphenyllins and uscandidusins, p-terphenyl derivatives. Within the pathway, ucdC catalyzes O-methylation of the terphenyl triol intermediate produced by ucdB to yield terphenyllin carrying two methoxy moieties at C-9 and C-12. The pathway begin with the biosynthesis of 4-hydroxyphenylpyruvate (HPPA) from L-tyrosine, possibly by the aminotransferase ucdG. The nonribosomal peptide synthetase ucdA then condenses two HPPA units to produce atromentin. The key step in this pathway is the reduction and dehydration of atromentin to form a terphenyl triol intermediate, performed by the NAD-dependent dehydrogenase ucdB. Further O-methylation by the methyltransferase ucdC forms terphenyllin carrying two methoxy moieties at C-9 and C-12, and subsequent dihydroxylation at C-3 of ring A and C-15 of ring C by the flavin-dependent oxygenase ucdD leads to 3,15-dihydroxyterphenyllin. Prenylation by ucdE at position C-5 of ring A forms usterphenyllin B, and is followed by a second prenylation at position C-14 of ring C to form usterphenyllin A. The following furan ring formation that leads to uscandidusins A and B was proven to be an unexpected spontaneous non-enzymatic reaction. The protein is O-methyltransferase ucdC of Aspergillus ustus.